Consider the following 868-residue polypeptide: Envelope glycoprotein gp160 (868 aa).

The N-terminal stretch at 1–33 (MAMRAKGIRKNCQHLWRWGTMLLGMLMICSAAA) is a signal peptide. At 34-696 (NLWVTVYYGV…ITKWLWYIKI (663 aa)) the chain is on the extracellular side. A disulfide bridge connects residues C55 and C75. N-linked (GlcNAc...) asparagine; by host glycans are attached at residues N89, N131, N138, N139, N142, N162, N166, N195, N198, N208, N245, N252, N273, N287, N300, N306, N312, N342, N349, N365, and N371. 5 disulfides stabilise this stretch: C120–C216, C127–C207, C132–C163, C229–C258, and C239–C250. A V1 region spans residues 132-162 (CTDLNTNNTTNTTELSIIVVWEQRGKGEMRN). The interval 163–207 (CSFNITTSIRDKVQREYALFYKLDVEPIDDNKNTTNNTKYRLINC) is V2. Residues 307–340 (CTRPNNHTRKRVTLGPGRVWYTTGEILGNIRQAH) form a V3 region. C307 and C341 form a disulfide bridge. Positions 373–383 (SSGGDPEIVMH) are CD4-binding loop. Disulfide bonds link C387–C456 and C394–C429. The interval 394–429 (CNSTQLFNSAWNVTSNGTWSVTRKQKDTGDIITLPC) is V4. N395, N405, N409, N459, and N473 each carry an N-linked (GlcNAc...) asparagine; by host glycan. 2 V5 regions span residues 472–482 (ENQTTEIFRPG) and 474–482 (QTTEIFRPG). A fusion peptide region spans residues 523 to 544 (AVGMLGAMFLGFLGAAGSTMGA). The immunosuppression stretch occupies residues 586-604 (KQLQARILAVERYLKDQQL). A disulfide bridge links C610 with C616. N623, N628, N637, and N649 each carry an N-linked (GlcNAc...) asparagine; by host glycan. The stretch at 645-679 (REIDNYTHLIYTLIEESQNQQEKNQQELLQLDKWA) forms a coiled coil. The segment at 674-695 (QLDKWASLWTWSDITKWLWYIK) is MPER; binding to GalCer. The chain crosses the membrane as a helical span at residues 697–717 (FIMIVGGLIGLRIVFAVLSIV). At 718–868 (NRVRQGYSPL…IRQGFERALL (151 aa)) the chain is on the cytoplasmic side. Positions 724 to 727 (YSPL) match the YXXL motif; contains endocytosis signal motif. Residues 731–755 (TLLPNPRGPDRPEGTEEGGGERGRD) are disordered. Positions 738–755 (GPDRPEGTEEGGGERGRD) are enriched in basic and acidic residues. Residue C776 is the site of S-palmitoyl cysteine; by host attachment. The short motif at 867–868 (LL) is the Di-leucine internalization motif element.

Belongs to the HIV-1 env protein family. The mature envelope protein (Env) consists of a homotrimer of non-covalently associated gp120-gp41 heterodimers. The resulting complex protrudes from the virus surface as a spike. There seems to be as few as 10 spikes on the average virion. Interacts with host CD4, CCR5 and CXCR4. Gp120 also interacts with the C-type lectins CD209/DC-SIGN and CLEC4M/DC-SIGNR (collectively referred to as DC-SIGN(R)). Gp120 and gp41 interact with GalCer. Gp120 interacts with host ITGA4/ITGB7 complex; on CD4+ T-cells, this interaction results in rapid activation of integrin ITGAL/LFA-1, which facilitates efficient cell-to-cell spreading of HIV-1. Gp120 interacts with cell-associated heparan sulfate; this interaction increases virus infectivity on permissive cells and may be involved in infection of CD4- cells. In terms of assembly, the mature envelope protein (Env) consists of a homotrimer of non-covalently associated gp120-gp41 heterodimers. The resulting complex protrudes from the virus surface as a spike. There seems to be as few as 10 spikes on the average virion. In terms of processing, highly glycosylated by host. The high number of glycan on the protein is reffered to as 'glycan shield' because it contributes to hide protein sequence from adaptive immune system. Post-translationally, palmitoylation of the transmembrane protein and of Env polyprotein (prior to its proteolytic cleavage) is essential for their association with host cell membrane lipid rafts. Palmitoylation is therefore required for envelope trafficking to classical lipid rafts, but not for viral replication. Specific enzymatic cleavages in vivo yield mature proteins. Envelope glycoproteins are synthesized as an inactive precursor that is heavily N-glycosylated and processed likely by host cell furin in the Golgi to yield the mature SU and TM proteins. The cleavage site between SU and TM requires the minimal sequence [KR]-X-[KR]-R. About 2 of the 9 disulfide bonds of gp41 are reduced by P4HB/PDI, following binding to CD4 receptor.

Its subcellular location is the virion membrane. It is found in the host cell membrane. The protein localises to the host endosome membrane. Oligomerizes in the host endoplasmic reticulum into predominantly trimers. In a second time, gp160 transits in the host Golgi, where glycosylation is completed. The precursor is then proteolytically cleaved in the trans-Golgi and thereby activated by cellular furin or furin-like proteases to produce gp120 and gp41. Its function is as follows. Attaches the virus to the host lymphoid cell by binding to the primary receptor CD4. This interaction induces a structural rearrangement creating a high affinity binding site for a chemokine coreceptor like CXCR4 and/or CCR5. Acts as a ligand for CD209/DC-SIGN and CLEC4M/DC-SIGNR, which are respectively found on dendritic cells (DCs), and on endothelial cells of liver sinusoids and lymph node sinuses. These interactions allow capture of viral particles at mucosal surfaces by these cells and subsequent transmission to permissive cells. HIV subverts the migration properties of dendritic cells to gain access to CD4+ T-cells in lymph nodes. Virus transmission to permissive T-cells occurs either in trans (without DCs infection, through viral capture and transmission), or in cis (following DCs productive infection, through the usual CD4-gp120 interaction), thereby inducing a robust infection. In trans infection, bound virions remain infectious over days and it is proposed that they are not degraded, but protected in non-lysosomal acidic organelles within the DCs close to the cell membrane thus contributing to the viral infectious potential during DCs' migration from the periphery to the lymphoid tissues. On arrival at lymphoid tissues, intact virions recycle back to DCs' cell surface allowing virus transmission to CD4+ T-cells. In terms of biological role, acts as a class I viral fusion protein. Under the current model, the protein has at least 3 conformational states: pre-fusion native state, pre-hairpin intermediate state, and post-fusion hairpin state. During fusion of viral and target intracellular membranes, the coiled coil regions (heptad repeats) assume a trimer-of-hairpins structure, positioning the fusion peptide in close proximity to the C-terminal region of the ectodomain. The formation of this structure appears to drive apposition and subsequent fusion of viral and target cell membranes. Complete fusion occurs in host cell endosomes and is dynamin-dependent, however some lipid transfer might occur at the plasma membrane. The virus undergoes clathrin-dependent internalization long before endosomal fusion, thus minimizing the surface exposure of conserved viral epitopes during fusion and reducing the efficacy of inhibitors targeting these epitopes. Membranes fusion leads to delivery of the nucleocapsid into the cytoplasm. This chain is Envelope glycoprotein gp160, found in Human immunodeficiency virus type 1 group M subtype B (isolate CDC-451) (HIV-1).